The following is a 380-amino-acid chain: Methenyltetrahydrofolate synthase domain-containing protein (380 aa).

A compositionally biased stretch (basic and acidic residues) spans 245 to 258 (EEQAGKDVTLRDGP). Disordered regions lie at residues 245-283 (EEQA…PLSS) and 361-380 (LVGS…IAGP). Residues 282–355 (SSVQIGNLPR…NTVRVVLARQ (74 aa)) enclose the RRM domain.

The chain is Methenyltetrahydrofolate synthase domain-containing protein (MTHFSD) from Bos taurus (Bovine).